A 568-amino-acid chain; its full sequence is Fumarate hydratase 2 (568 aa).

Cys133 provides a ligand contact to [4Fe-4S] cluster. (S)-malate contacts are provided by residues 134-135, Arg173, Gly216, and 219-225; these read QD and NKAYLYQ. 2 residues coordinate [4Fe-4S] cluster: Cys252 and Cys346. Residues Arg421, 467–471, and Lys491 contribute to the (S)-malate site; that span reads TTAGR.

The protein belongs to the class-I fumarase family. In terms of assembly, homodimer. [4Fe-4S] cluster serves as cofactor.

It localises to the cytoplasm. It is found in the cytosol. The catalysed reaction is (S)-malate = fumarate + H2O. Its activity is regulated as follows. Specifically and competitively inhibited by 2-thiomalate, which coordinates with the catalytic [4Fe-4S] cluster. Weakly inhibited by malonate. Its function is as follows. Cytosolic fumarate hydratase that catalyzes the reversible hydration of fumarate to (S)-malate. In Leishmania major, this protein is Fumarate hydratase 2.